A 75-amino-acid chain; its full sequence is Small ribosomal subunit protein bS18 (75 aa).

It belongs to the bacterial ribosomal protein bS18 family. Part of the 30S ribosomal subunit. Forms a tight heterodimer with protein bS6.

Binds as a heterodimer with protein bS6 to the central domain of the 16S rRNA, where it helps stabilize the platform of the 30S subunit. The polypeptide is Small ribosomal subunit protein bS18 (rbsR) (Rhodobacter capsulatus (strain ATCC BAA-309 / NBRC 16581 / SB1003)).